The sequence spans 276 residues: Phosphatidylglycerol--prolipoprotein diacylglyceryl transferase (276 aa).

Transmembrane regions (helical) follow at residues 17–37 (LAIRWYGLMYLAGFIMFLWFG), 59–79 (MLFFGVMGVILGGRLGYVLFY), 95–115 (WEGGMAFHGGFLGVLVAMWLF), 129–149 (FIAPMIPCGLAAGRIGNFING), 176–196 (SQLYQFAGEGVALFIILWLFA), 202–222 (MGAVSGVFLIGYGGFRFAAEF), and 237–257 (LSMGQWLSLPMILIGIAMVVW). Arginine 142 contributes to the a 1,2-diacyl-sn-glycero-3-phospho-(1'-sn-glycerol) binding site.

It belongs to the Lgt family.

Its subcellular location is the cell inner membrane. It catalyses the reaction L-cysteinyl-[prolipoprotein] + a 1,2-diacyl-sn-glycero-3-phospho-(1'-sn-glycerol) = an S-1,2-diacyl-sn-glyceryl-L-cysteinyl-[prolipoprotein] + sn-glycerol 1-phosphate + H(+). It functions in the pathway protein modification; lipoprotein biosynthesis (diacylglyceryl transfer). Its function is as follows. Catalyzes the transfer of the diacylglyceryl group from phosphatidylglycerol to the sulfhydryl group of the N-terminal cysteine of a prolipoprotein, the first step in the formation of mature lipoproteins. This is Phosphatidylglycerol--prolipoprotein diacylglyceryl transferase from Cupriavidus pinatubonensis (strain JMP 134 / LMG 1197) (Cupriavidus necator (strain JMP 134)).